A 232-amino-acid chain; its full sequence is Small ribosomal subunit protein uS2 (232 aa).

This sequence belongs to the universal ribosomal protein uS2 family.

The sequence is that of Small ribosomal subunit protein uS2 from Pelotomaculum thermopropionicum (strain DSM 13744 / JCM 10971 / SI).